Here is a 318-residue protein sequence, read N- to C-terminus: Small ribosomal subunit biogenesis GTPase RsgA (318 aa).

The CP-type G domain occupies 82 to 246 (RQDEIRTKSF…LIDSPGFQEF (165 aa)). GTP contacts are provided by residues 132–135 (NKSD) and 186–194 (GPSGAGKST). Cysteine 270, cysteine 275, histidine 277, and cysteine 283 together coordinate Zn(2+).

This sequence belongs to the TRAFAC class YlqF/YawG GTPase family. RsgA subfamily. As to quaternary structure, monomer. Associates with 30S ribosomal subunit, binds 16S rRNA. The cofactor is Zn(2+).

It localises to the cytoplasm. One of several proteins that assist in the late maturation steps of the functional core of the 30S ribosomal subunit. Helps release RbfA from mature subunits. May play a role in the assembly of ribosomal proteins into the subunit. Circularly permuted GTPase that catalyzes slow GTP hydrolysis, GTPase activity is stimulated by the 30S ribosomal subunit. The protein is Small ribosomal subunit biogenesis GTPase RsgA of Variovorax paradoxus (strain S110).